A 56-amino-acid chain; its full sequence is Ribosome modulation factor (56 aa).

It belongs to the ribosome modulation factor family.

Its subcellular location is the cytoplasm. In terms of biological role, during stationary phase, converts 70S ribosomes to an inactive dimeric form (100S ribosomes). The polypeptide is Ribosome modulation factor (Serratia proteamaculans (strain 568)).